A 355-amino-acid chain; its full sequence is Peptide chain release factor 1 (355 aa).

The residue at position 233 (glutamine 233) is an N5-methylglutamine.

This sequence belongs to the prokaryotic/mitochondrial release factor family. Post-translationally, methylated by PrmC. Methylation increases the termination efficiency of RF1.

It localises to the cytoplasm. In terms of biological role, peptide chain release factor 1 directs the termination of translation in response to the peptide chain termination codons UAG and UAA. This Bacillus anthracis protein is Peptide chain release factor 1.